A 528-amino-acid chain; its full sequence is Zinc finger protein 16-like (528 aa).

The interval 1–28 (MSRKRNHCYMETGASSESQGAFVDSAGP) is disordered. Positions 79–106 (IRVLKMELREKSDEIELLKAKLESAEKD) form a coiled coil. 2 disordered regions span residues 159–202 (GAAE…TDAE) and 232–293 (FKGD…DRME). The span at 232 to 242 (FKGDSETKCED) shows a compositional bias: basic and acidic residues. Positions 244 to 256 (PPMDEEDENEDSE) are enriched in acidic residues. Composition is skewed to basic and acidic residues over residues 257-270 (EGRG…DHFP) and 278-293 (GEDR…DRME). The C2H2-type 1 zinc-finger motif lies at 303-326 (FICPFCGTLCPDSSFLEEHIKLMH). Residues 333–345 (QSTSAGSSSQAEG) show a composition bias toward low complexity. The interval 333–359 (QSTSAGSSSQAEGDSGEAGPASRGARE) is disordered. C2H2-type zinc fingers lie at residues 366–388 (YECG…QRIH), 394–416 (FVCP…RLSH), 423–445 (FPCP…QRVH), and 451–473 (YACP…MRIH). A C2H2-type 6; degenerate zinc finger spans residues 479 to 501 (YTCYQCGRSFRHLGTYKSHRCMP). Residues 502-528 (ATQMPSEHSPPWAQEDKVQTGRLQGYV) form a disordered region.

This sequence belongs to the krueppel C2H2-type zinc-finger protein family.

Its subcellular location is the nucleus. Probable transcription factor. Important for development and migration of oligodendrocyte precursor cells, and normal myelination of axons in the central nervous system (CNS). Functions autonomously in oligodendrocytes to promote CNS myelination. Seems to act in parallel with notch3 during oligodendrocyte development. The protein is Zinc finger protein 16-like of Danio rerio (Zebrafish).